The sequence spans 349 residues: Protein-glutamate methylesterase/protein-glutamine glutaminase (349 aa).

In terms of domain architecture, Response regulatory spans 5–122 (RVLSVDDSAL…REGMLAYNEM (118 aa)). A 4-aspartylphosphate modification is found at aspartate 56. Positions 152–344 (LLSSEKLIAI…QQMLAKISAG (193 aa)) constitute a CheB-type methylesterase domain. Residues serine 164, histidine 190, and aspartate 286 contribute to the active site.

It belongs to the CheB family. As to quaternary structure, interacts with CheA. Binds to a C-terminal pentapeptide sequence carried by certain receptors. In terms of processing, phosphorylated by CheA. Phosphorylation of the N-terminal regulatory domain activates the methylesterase activity.

Its subcellular location is the cytoplasm. It carries out the reaction [protein]-L-glutamate 5-O-methyl ester + H2O = L-glutamyl-[protein] + methanol + H(+). The enzyme catalyses L-glutaminyl-[protein] + H2O = L-glutamyl-[protein] + NH4(+). Methylesterase activity is activated via phosphorylation in response to negative chemotactic stimuli and is inhibited in the presence of attractants. Activation requires both CheA and CheW. Functionally, involved in chemotaxis. Part of a chemotaxis signal transduction system that modulates chemotaxis in response to various stimuli. Catalyzes the demethylation of specific methylglutamate residues introduced into the chemoreceptors (methyl-accepting chemotaxis proteins or MCP) by CheR. Also mediates the irreversible deamidation of specific glutamine residues to glutamic acid. Catalyzes its own deactivation by removing the activating phosphoryl group. The chain is Protein-glutamate methylesterase/protein-glutamine glutaminase from Escherichia coli (strain K12).